The sequence spans 118 residues: MLEFAPICIYLVISLLVSLILLGVPFLFASNSSTYPEKLSAYECGFDPFGDARSRFDIRFYLVSILFIIFDLEVTFFFPWAVSLNKIDLFGFWSMMAFLLILFIGSLYEWKRGALDWE.

3 consecutive transmembrane segments (helical) span residues 9–29, 62–82, and 87–107; these read IYLVISLLVSLILLGVPFLFA, LVSILFIIFDLEVTFFFPWAV, and IDLFGFWSMMAFLLILFIGSL.

The protein belongs to the complex I subunit 3 family.

The protein localises to the mitochondrion membrane. It carries out the reaction a ubiquinone + NADH + 5 H(+)(in) = a ubiquinol + NAD(+) + 4 H(+)(out). In terms of biological role, core subunit of the mitochondrial membrane respiratory chain NADH dehydrogenase (Complex I) that is believed to belong to the minimal assembly required for catalysis. Complex I functions in the transfer of electrons from NADH to the respiratory chain. The immediate electron acceptor for the enzyme is believed to be ubiquinone. The polypeptide is NADH-ubiquinone oxidoreductase chain 3 (ND3) (Zea mays (Maize)).